The primary structure comprises 60 residues: MKSNIKICASWQKKHEQPVYTLADTCPKCNSVTKNTAPAPFDPTDAYGEYRRALKQRVRE.

It belongs to the NOP10 family.

Its function is as follows. Involved in ribosome biogenesis; more specifically in 18S rRNA pseudouridylation and in cleavage of pre-rRNA. The chain is Ribosome biogenesis protein Nop10 from Haloquadratum walsbyi (strain DSM 16790 / HBSQ001).